We begin with the raw amino-acid sequence, 227 residues long: ATP-dependent dethiobiotin synthetase BioD (227 aa).

13–18 (DVGKTV) is a binding site for ATP. A Mg(2+)-binding site is contributed by threonine 17. The active site involves lysine 38. ATP is bound by residues aspartate 55, 116–119 (EGAG), 176–177 (NR), and 205–207 (PYI). Aspartate 55 and glutamate 116 together coordinate Mg(2+).

Belongs to the dethiobiotin synthetase family. In terms of assembly, homodimer. Mg(2+) serves as cofactor.

The protein resides in the cytoplasm. It catalyses the reaction (7R,8S)-7,8-diammoniononanoate + CO2 + ATP = (4R,5S)-dethiobiotin + ADP + phosphate + 3 H(+). The protein operates within cofactor biosynthesis; biotin biosynthesis; biotin from 7,8-diaminononanoate: step 1/2. In terms of biological role, catalyzes a mechanistically unusual reaction, the ATP-dependent insertion of CO2 between the N7 and N8 nitrogen atoms of 7,8-diaminopelargonic acid (DAPA, also called 7,8-diammoniononanoate) to form a ureido ring. The polypeptide is ATP-dependent dethiobiotin synthetase BioD (Vibrio campbellii (strain ATCC BAA-1116)).